A 593-amino-acid polypeptide reads, in one-letter code: Aspartate--tRNA(Asp/Asn) ligase (593 aa).

Residue E173 coordinates L-aspartate. The aspartate stretch occupies residues 197–200; the sequence is QLFK. R219 is an L-aspartate binding site. Residues 219–221 and Q228 contribute to the ATP site; that span reads RDE. L-aspartate is bound at residue H451. Position 485 (E485) interacts with ATP. R492 is a binding site for L-aspartate. 537-540 is a binding site for ATP; the sequence is GIDR.

The protein belongs to the class-II aminoacyl-tRNA synthetase family. Type 1 subfamily. In terms of assembly, homodimer.

Its subcellular location is the cytoplasm. The catalysed reaction is tRNA(Asx) + L-aspartate + ATP = L-aspartyl-tRNA(Asx) + AMP + diphosphate. In terms of biological role, aspartyl-tRNA synthetase with relaxed tRNA specificity since it is able to aspartylate not only its cognate tRNA(Asp) but also tRNA(Asn). Reaction proceeds in two steps: L-aspartate is first activated by ATP to form Asp-AMP and then transferred to the acceptor end of tRNA(Asp/Asn). The polypeptide is Aspartate--tRNA(Asp/Asn) ligase (Legionella pneumophila subsp. pneumophila (strain Philadelphia 1 / ATCC 33152 / DSM 7513)).